A 271-amino-acid chain; its full sequence is Homeobox protein pal-1 (271 aa).

Disordered stretches follow at residues 1 to 25 (MSVD…TNVN), 100 to 135 (PPLS…ASSS), and 178 to 202 (GSAG…TNNV). 2 stretches are compositionally biased toward low complexity: residues 100 to 117 (PPLS…YPSP) and 125 to 135 (STSSGIGASSS). Residues 189-202 (DTKSLPTGPGTNNV) show a composition bias toward polar residues. The homeobox DNA-binding region spans 207-266 (ADKYRMVYSDYQRLELEKEFHTSAFITSDRKSQLSTMLSLTERQIKIWFQNRRAKDRRDK).

This sequence belongs to the Caudal homeobox family. In terms of assembly, interacts with tir-1 and let-756.

The protein localises to the nucleus. The protein resides in the chromosome. It is found in the centromere. It localises to the kinetochore. In terms of biological role, transcriptional activator. Interacts with promoter regions for tbx-8.9, tbx-9, elt-1, hnd-1, scrt-1, and vab-7 genes. Binds the sequence ATTTATGAC. Binds to the enhancer region of the hlh-1 gene promoter during embryonic body wall muscle development. Activates the gene for mab-5 in embryo development. Necessary for vab-7 expression in C blastomeres in the posterior of embryos. Required for posterior V6 neuroectoblast cell fate specification during postembryonic neurogenesis (patterning) which generates the characteristic ray lineage during male tail development. Binds to ced-3 promoter and activated expression which is crucial for tail-spike cell death. Has a role in E cell specification in endoderm development and body wall muscle development. The polypeptide is Homeobox protein pal-1 (Caenorhabditis briggsae).